Consider the following 542-residue polypeptide: MAQGQQPIFILPQDTSRYVGREAQRINILAGKVLAETVRTTLGPKGMDKMLVDSLGDIVITNDGVTILREMDISHPAAKMLVEVAKTQEDEVGDGTTTAVIIAGELLKEAEKLIEMGVHPTIIALGYRNAALKAQEILEEISMEASDRDTLMKVAITAMTGKGSERAKEKLAELVVDAVMQVEEDGEIDKDNINIQRIQGASVNESRIVNGIVIDKSRADTSMPKRIEKARIALLKYPIEVKDLETDAKIRLTDPSQMQAFIEQEEQMIRDMVEKIKSSGANVVFCQKGIDDLALHYLSREGIMALKRVKKSDIKRIEKATGARLVTNIDDLTAEDLGEAGVIYEKKIFDEVLTFIEECRDPKAISIILRGSTKHVAEEMERALEDAIGVVASTLEDREVVAGGGAPEVEIARKLREYADTISGREQLAVSAFADALEIVPKTLAENAGLDSIDVLVDLRAAHEESPYMGIDVFDGNIVDMKEAGVIEPQRVKKQAIQSAAEAAEMILRIDDMIAARGFDVSSKDEEDMEGMGGMGGMPPMM.

The protein belongs to the TCP-1 chaperonin family. In terms of assembly, forms a Heterooligomeric complex of two stacked eight-membered rings.

Molecular chaperone; binds unfolded polypeptides in vitro, and has a weak ATPase activity. The chain is Thermosome subunit alpha (thsA) from Methanothermobacter thermautotrophicus (strain ATCC 29096 / DSM 1053 / JCM 10044 / NBRC 100330 / Delta H) (Methanobacterium thermoautotrophicum).